The following is a 475-amino-acid chain: Ankyrin repeat, SAM and basic leucine zipper domain-containing protein 1 (475 aa).

Phosphoserine occurs at positions 17, 18, and 20. 6 ANK repeats span residues glutamate 45 to serine 74, tyrosine 78 to phenylalanine 107, aspartate 110 to valine 144, arginine 148 to serine 177, asparagine 181 to leucine 210, and aspartate 214 to glycine 243. The SAM domain maps to serine 272–glutamate 334.

In terms of assembly, interacts with DDX4, PIWIL1, RANBP9 and TDRD1.

The protein resides in the cytoplasm. In terms of biological role, plays a central role during spermatogenesis by repressing transposable elements and preventing their mobilization, which is essential for the germline integrity. Acts via the piRNA metabolic process, which mediates the repression of transposable elements during meiosis by forming complexes composed of piRNAs and Piwi proteins and governs the methylation and subsequent repression of transposons. Its association with pi-bodies suggests a participation in the primary piRNAs metabolic process. Required prior to the pachytene stage to facilitate the production of multiple types of piRNAs, including those associated with repeats involved in the regulation of retrotransposons. May act by mediating protein-protein interactions during germ cell maturation. In Mustela putorius furo (European domestic ferret), this protein is Ankyrin repeat, SAM and basic leucine zipper domain-containing protein 1 (ASZ1).